The primary structure comprises 229 residues: Large ribosomal subunit protein uL3 (229 aa).

An N5-methylglutamine modification is found at Gln-151.

The protein belongs to the universal ribosomal protein uL3 family. Part of the 50S ribosomal subunit. Forms a cluster with proteins L14 and L19. Post-translationally, methylated by PrmB.

Its function is as follows. One of the primary rRNA binding proteins, it binds directly near the 3'-end of the 23S rRNA, where it nucleates assembly of the 50S subunit. This chain is Large ribosomal subunit protein uL3, found in Paramagnetospirillum magneticum (strain ATCC 700264 / AMB-1) (Magnetospirillum magneticum).